Consider the following 377-residue polypeptide: MQTPSQEEVRRAVAAARTVVVKVGSSSLTQPSGHLDVDKLNALVGAIAQVRMLGGNIVLVSSGAIAAGFGPLGFESRPTDVATQQATASVGQGLLMAQYEMAFGRYGIRVGQLLITAEDTMQPRQYRNARRTMAKLLELGVVPIVNENDALASNEIRFGDNDRLSALIANMVRADALILLTDVDALYTAPPSEPGSHRIGFVPNITELLDQVRVGGSESGVGTGGMVTKLEAARMAAVSGIPAVLTAARNAGPALMGDEVGTAFAPVKQRGSARRLWIKFAAHPRGVLVADSGAAKAVRGGRASLLAAGVLESRGDFAAGDPVWIDDEAGNHLARGLAGYDSEEIPNMLGRNTAQLRRLLGEEYAHPLVHRDNLVLV.

Lysine 22 serves as a coordination point for ATP. 3 residues coordinate substrate: serine 62, aspartate 149, and asparagine 161. Residues 181–182 and 223–229 each bind ATP; these read TD and TGGMVTK. Residues 285–363 enclose the PUA domain; that stretch reads RGVLVADSGA…AQLRRLLGEE (79 aa).

The protein belongs to the glutamate 5-kinase family.

It localises to the cytoplasm. The catalysed reaction is L-glutamate + ATP = L-glutamyl 5-phosphate + ADP. It functions in the pathway amino-acid biosynthesis; L-proline biosynthesis; L-glutamate 5-semialdehyde from L-glutamate: step 1/2. Functionally, catalyzes the transfer of a phosphate group to glutamate to form L-glutamate 5-phosphate. This is Glutamate 5-kinase from Bifidobacterium animalis subsp. lactis (strain AD011).